Reading from the N-terminus, the 378-residue chain is Ribosomal RNA large subunit methyltransferase G (378 aa).

This sequence belongs to the methyltransferase superfamily. RlmG family.

The protein resides in the cytoplasm. It carries out the reaction guanosine(1835) in 23S rRNA + S-adenosyl-L-methionine = N(2)-methylguanosine(1835) in 23S rRNA + S-adenosyl-L-homocysteine + H(+). Functionally, specifically methylates the guanine in position 1835 (m2G1835) of 23S rRNA. This is Ribosomal RNA large subunit methyltransferase G from Salmonella agona (strain SL483).